Here is a 156-residue protein sequence, read N- to C-terminus: Ribosomal RNA large subunit methyltransferase H (156 aa).

S-adenosyl-L-methionine is bound by residues Leu-73, Gly-104, and 123-128; that span reads LSPLTM.

Belongs to the RNA methyltransferase RlmH family. Homodimer.

It is found in the cytoplasm. The catalysed reaction is pseudouridine(1915) in 23S rRNA + S-adenosyl-L-methionine = N(3)-methylpseudouridine(1915) in 23S rRNA + S-adenosyl-L-homocysteine + H(+). Functionally, specifically methylates the pseudouridine at position 1915 (m3Psi1915) in 23S rRNA. The chain is Ribosomal RNA large subunit methyltransferase H from Proteus mirabilis (strain HI4320).